The sequence spans 214 residues: ATP phosphoribosyltransferase (214 aa).

The protein belongs to the ATP phosphoribosyltransferase family. Short subfamily. Heteromultimer composed of HisG and HisZ subunits.

It is found in the cytoplasm. The catalysed reaction is 1-(5-phospho-beta-D-ribosyl)-ATP + diphosphate = 5-phospho-alpha-D-ribose 1-diphosphate + ATP. It functions in the pathway amino-acid biosynthesis; L-histidine biosynthesis; L-histidine from 5-phospho-alpha-D-ribose 1-diphosphate: step 1/9. Its function is as follows. Catalyzes the condensation of ATP and 5-phosphoribose 1-diphosphate to form N'-(5'-phosphoribosyl)-ATP (PR-ATP). Has a crucial role in the pathway because the rate of histidine biosynthesis seems to be controlled primarily by regulation of HisG enzymatic activity. This Halorhodospira halophila (strain DSM 244 / SL1) (Ectothiorhodospira halophila (strain DSM 244 / SL1)) protein is ATP phosphoribosyltransferase.